Here is a 460-residue protein sequence, read N- to C-terminus: Transcription factor AP-2-beta (460 aa).

A Glycyl lysine isopeptide (Lys-Gly) (interchain with G-Cter in SUMO) cross-link involves residue K21. Positions 30–139 are disordered; it reads HDGVPSHSSR…PQLSGLDPRR (110 aa). Residues 35–51 are compositionally biased toward polar residues; it reads SHSSRLSQLGSVSQGPY. Residues 121–132 show a composition bias toward low complexity; that stretch reads LLPQPRAALPQL. S258 carries the phosphoserine; by PKA modification. The tract at residues 435–460 is disordered; that stretch reads NTTTNRHTSGEGPGSKTGDKEEKHRK. A compositionally biased stretch (basic and acidic residues) spans 451-460; sequence TGDKEEKHRK.

It belongs to the AP-2 family. As to quaternary structure, binds DNA as a dimer. Can form homodimers or heterodimers with other AP-2 family members. Interacts with CITED4. Interacts with UBE2I. Interacts with KCTD1; this interaction represses transcription activation. Interacts with CITED2 (via C-terminus); the interaction stimulates TFAP2B-transcriptional activity. Post-translationally, sumoylated on Lys-21; which inhibits transcriptional activity.

The protein localises to the nucleus. Functionally, sequence-specific DNA-binding protein that interacts with inducible viral and cellular enhancer elements to regulate transcription of selected genes. AP-2 factors bind to the consensus sequence 5'-GCCNNNGGC-3' and activate genes involved in a large spectrum of important biological functions including proper eye, face, body wall, limb and neural tube development. They also suppress a number of genes including MCAM/MUC18, C/EBP alpha and MYC. AP-2-beta appears to be required for normal face and limb development and for proper terminal differentiation and function of renal tubular epithelia. The sequence is that of Transcription factor AP-2-beta (TFAP2B) from Canis lupus familiaris (Dog).